A 68-amino-acid chain; its full sequence is Tetrahydromethanopterin S-methyltransferase subunit F (68 aa).

A helical transmembrane segment spans residues 45 to 65 (IAIGFLLAVLLVGVPAMMSIL).

Belongs to the MtrF family. In terms of assembly, the complex is composed of 8 subunits; MtrA, MtrB, MtrC, MtrD, MtrE, MtrF, MtrG and MtrH.

It is found in the cell membrane. It catalyses the reaction 5-methyl-5,6,7,8-tetrahydromethanopterin + coenzyme M + 2 Na(+)(in) = 5,6,7,8-tetrahydromethanopterin + methyl-coenzyme M + 2 Na(+)(out). It participates in one-carbon metabolism; methanogenesis from CO(2); methyl-coenzyme M from 5,10-methylene-5,6,7,8-tetrahydromethanopterin: step 2/2. Its function is as follows. Part of a complex that catalyzes the formation of methyl-coenzyme M and tetrahydromethanopterin from coenzyme M and methyl-tetrahydromethanopterin. This is an energy-conserving, sodium-ion translocating step. The chain is Tetrahydromethanopterin S-methyltransferase subunit F (mtrF) from Methanothermobacter marburgensis (strain ATCC BAA-927 / DSM 2133 / JCM 14651 / NBRC 100331 / OCM 82 / Marburg) (Methanobacterium thermoautotrophicum).